A 193-amino-acid polypeptide reads, in one-letter code: Chaperone protein TorD (193 aa).

The protein belongs to the TorD/DmsD family. TorD subfamily.

The protein localises to the cytoplasm. Functionally, involved in the biogenesis of TorA. Acts on TorA before the insertion of the molybdenum cofactor and, as a result, probably favors a conformation of the apoenzyme that is competent for acquiring the cofactor. This is Chaperone protein TorD from Actinobacillus succinogenes (strain ATCC 55618 / DSM 22257 / CCUG 43843 / 130Z).